The primary structure comprises 279 residues: Energy-coupling factor transporter ATP-binding protein EcfA1 (279 aa).

Positions 6-240 (VEFRNVSFRY…KDALREIGLD (235 aa)) constitute an ABC transporter domain. 40–47 (GHNGSGKS) contributes to the ATP binding site.

It belongs to the ABC transporter superfamily. Energy-coupling factor EcfA family. Forms a stable energy-coupling factor (ECF) transporter complex composed of 2 membrane-embedded substrate-binding proteins (S component), 2 ATP-binding proteins (A component) and 2 transmembrane proteins (T component).

It is found in the cell membrane. ATP-binding (A) component of a common energy-coupling factor (ECF) ABC-transporter complex. Unlike classic ABC transporters this ECF transporter provides the energy necessary to transport a number of different substrates. The protein is Energy-coupling factor transporter ATP-binding protein EcfA1 of Oceanobacillus iheyensis (strain DSM 14371 / CIP 107618 / JCM 11309 / KCTC 3954 / HTE831).